A 481-amino-acid chain; its full sequence is Cysteine--tRNA ligase (481 aa).

Position 29 (cysteine 29) interacts with Zn(2+). The 'HIGH' region motif lies at 31 to 41; that stretch reads PTVYDYSHLGH. The Zn(2+) site is built by cysteine 210, histidine 235, and glutamate 239. The 'KMSKS' region signature appears at 272–276; that stretch reads KMSKS. An ATP-binding site is contributed by lysine 275.

The protein belongs to the class-I aminoacyl-tRNA synthetase family. As to quaternary structure, monomer. It depends on Zn(2+) as a cofactor.

It localises to the cytoplasm. The catalysed reaction is tRNA(Cys) + L-cysteine + ATP = L-cysteinyl-tRNA(Cys) + AMP + diphosphate. The polypeptide is Cysteine--tRNA ligase (Anaeromyxobacter dehalogenans (strain 2CP-1 / ATCC BAA-258)).